A 244-amino-acid polypeptide reads, in one-letter code: Salivary gland SP38-40.A protein (244 aa).

The first 21 residues, 1–21 (MRIKFLVVLAVICLFAHYASA), serve as a signal peptide directing secretion. Disordered stretches follow at residues 23-91 (GMGG…EKKQ), 137-169 (PPPG…LRKE), and 206-244 (VQGK…DAKK). Basic and acidic residues-rich tracts occupy residues 26–86 (GDKK…EVKK) and 157–169 (PPKE…LRKE). 2 repeat units span residues 29–34 (KPKDAP) and 35–40 (KPKDAP). The tract at residues 29 to 47 (KPKDAPKPKDAPKPKEVKP) is 3 X 6 AA approximate tandem repeats of K-P-K-D-A-P. The stretch at 41–47 (KPKEVKP) is one 1-3; approximate repeat. A run of 2 repeats spans residues 156–159 (KPPK) and 161–164 (KPPK). The 3 X 4 AA approximate tandem repeats of K-P-P-K stretch occupies residues 156–168 (KPPKEKPPKKLRK). One copy of the 2-3; approximate repeat lies at 165-168 (KLRK). Residues 209 to 224 (KQKKGAKKAKGGKKAA) show a composition bias toward basic residues. Repeat copies occupy residues 225–228 (PKPG), 229–232 (PKPG), and 233–236 (PKQA). Positions 225–240 (PKPGPKPGPKQADKPK) are 4 X 4 AA approximate tandem repeats of P-K-[PQ]-[GA]. Positions 235-244 (QADKPKDAKK) are enriched in basic and acidic residues. The 3-4; approximate repeat unit spans residues 237-240 (DKPK).

As to expression, salivary gland.

The protein localises to the secreted. Functionally, used by the larvae to construct a supramolecular structure, the larval tube. The protein is Salivary gland SP38-40.A protein (SP38-40.A) of Chironomus tentans (Midge).